Consider the following 547-residue polypeptide: Putative HMP/thiamine import ATP-binding protein YkoD (547 aa).

ABC transporter domains follow at residues L8–I250 and L295–L523. ATP-binding positions include G42 to S49 and G327 to S334.

Belongs to the ABC transporter superfamily. The complex is composed of two ATP-binding proteins (YkoD), two transmembrane proteins (YkoC and YkoE) and a solute-binding protein (YkoF).

Its subcellular location is the cell membrane. Part of the ABC transporter complex YkoCDEF that could transport hydroxymethylpyrimidine (HMP) and/or thiamine. Could also transport other HMP-containing products. Responsible for energy coupling to the transport system. This Bacillus subtilis (strain 168) protein is Putative HMP/thiamine import ATP-binding protein YkoD (ykoD).